Consider the following 318-residue polypeptide: Beta-ketoacyl-[acyl-carrier-protein] synthase III (318 aa).

Catalysis depends on residues Cys-113 and His-245. The interval 246–250 is ACP-binding; sequence QANIR. The active site involves Asn-275.

It belongs to the thiolase-like superfamily. FabH family. As to quaternary structure, homodimer.

It localises to the cytoplasm. The catalysed reaction is malonyl-[ACP] + acetyl-CoA + H(+) = 3-oxobutanoyl-[ACP] + CO2 + CoA. It functions in the pathway lipid metabolism; fatty acid biosynthesis. Catalyzes the condensation reaction of fatty acid synthesis by the addition to an acyl acceptor of two carbons from malonyl-ACP. Catalyzes the first condensation reaction which initiates fatty acid synthesis and may therefore play a role in governing the total rate of fatty acid production. Possesses both acetoacetyl-ACP synthase and acetyl transacylase activities. Its substrate specificity determines the biosynthesis of branched-chain and/or straight-chain of fatty acids. This chain is Beta-ketoacyl-[acyl-carrier-protein] synthase III, found in Wolbachia pipientis subsp. Culex pipiens (strain wPip).